Here is a 140-residue protein sequence, read N- to C-terminus: Secreted RxLR effector protein 37 (140 aa).

The signal sequence occupies residues 1–22 (MTYRLPFVAVILFVTAKHVVLA). The short motif at 57-76 (RFLRQLEKKPGVNDKRDEER) is the RxLR-dEER element.

The protein belongs to the RxLR effector family.

It localises to the secreted. It is found in the host nucleus. The protein localises to the host cytoplasm. In terms of biological role, secreted effector that completely suppresses the host cell death induced by cell death-inducing proteins. This is Secreted RxLR effector protein 37 from Plasmopara viticola (Downy mildew of grapevine).